The chain runs to 81 residues: Small ribosomal subunit protein bS16 (81 aa).

The protein belongs to the bacterial ribosomal protein bS16 family.

This chain is Small ribosomal subunit protein bS16, found in Neisseria gonorrhoeae (strain ATCC 700825 / FA 1090).